Consider the following 504-residue polypeptide: Maturase K (504 aa).

It belongs to the intron maturase 2 family. MatK subfamily.

It localises to the plastid. Its subcellular location is the chloroplast. Functionally, usually encoded in the trnK tRNA gene intron. Probably assists in splicing its own and other chloroplast group II introns. The protein is Maturase K of Bombax buonopozense (Red-flowered silk cotton tree).